Here is a 124-residue protein sequence, read N- to C-terminus: uncharacterized protein (124 aa).

Residues 2–22 (AIIIAIIAAVIVIAALITFNV) form a helical membrane-spanning segment. Positions 24–124 (NASPGPEKQE…ALLSMKNKKK (101 aa)) are disordered. Composition is skewed to basic and acidic residues over residues 30-58 (EKQE…RAAE), 67-81 (DSPK…DDIY), and 89-113 (KHSD…RSYR).

Its subcellular location is the membrane. This is an uncharacterized protein from Bacillus subtilis (strain 168).